Consider the following 75-residue polypeptide: DNA-directed RNA polymerase subunit omega (75 aa).

It belongs to the RNA polymerase subunit omega family. In cyanobacteria the RNAP catalytic core is composed of 2 alpha, 1 beta, 1 beta', 1 gamma and 1 omega subunit. When a sigma factor is associated with the core the holoenzyme is formed, which can initiate transcription.

The enzyme catalyses RNA(n) + a ribonucleoside 5'-triphosphate = RNA(n+1) + diphosphate. Functionally, promotes RNA polymerase assembly. Latches the N- and C-terminal regions of the beta' subunit thereby facilitating its interaction with the beta and alpha subunits. This Synechococcus sp. (strain CC9311) protein is DNA-directed RNA polymerase subunit omega.